The following is a 285-amino-acid chain: 2-dehydro-3-deoxyphosphooctonate aldolase (285 aa).

This sequence belongs to the KdsA family.

Its subcellular location is the cytoplasm. It catalyses the reaction D-arabinose 5-phosphate + phosphoenolpyruvate + H2O = 3-deoxy-alpha-D-manno-2-octulosonate-8-phosphate + phosphate. Its pathway is carbohydrate biosynthesis; 3-deoxy-D-manno-octulosonate biosynthesis; 3-deoxy-D-manno-octulosonate from D-ribulose 5-phosphate: step 2/3. It functions in the pathway bacterial outer membrane biogenesis; lipopolysaccharide biosynthesis. This chain is 2-dehydro-3-deoxyphosphooctonate aldolase, found in Bordetella parapertussis (strain 12822 / ATCC BAA-587 / NCTC 13253).